Consider the following 444-residue polypeptide: Beta-D-glucosyl crocetin beta-1,6-glucosyltransferase (444 aa).

Residue His9 is the Proton acceptor of the active site. Residue His9 coordinates an anthocyanidin. Catalysis depends on Asp108, which acts as the Charge relay. 10 residues coordinate UDP-alpha-D-glucose: Thr130, Ala319, Gln321, His336, Trp339, Asn340, Ser341, Glu344, Asp360, and Gln361.

This sequence belongs to the UDP-glycosyltransferase family. As to expression, ubiquitous.

It carries out the reaction beta-D-glucosyl crocetin + UDP-alpha-D-glucose = beta-D-gentiobiosyl crocetin + UDP + H(+). The enzyme catalyses bis(beta-D-glucosyl) crocetin + UDP-alpha-D-glucose = beta-D-gentiobiosyl beta-D-glucosyl crocetin + UDP + H(+). The catalysed reaction is beta-D-gentiobiosyl beta-D-glucosyl crocetin + UDP-alpha-D-glucose = bis(beta-D-gentiobiosyl) crocetin + UDP + H(+). In terms of biological role, glucosyltransferase catalyzing the beta 1-6 glucosylation of the sugar moiety of crocetin glucosyl esters to produce crocetin gentiobiosyl esters. Weak activity toward curcumin glucosides, but no activity with flavonoid glucosides, coumarin glucosides, 4-nitrophenyl glucoside or crocetin. Involved with UGT75L6 in sequential glycosylation of crocetin to crocin (bis(beta-D-gentiobiosyl) crocetin). This chain is Beta-D-glucosyl crocetin beta-1,6-glucosyltransferase (UGT94E5), found in Gardenia jasminoides (Cape jasmine).